The primary structure comprises 316 residues: 4-hydroxy-3-methylbut-2-enyl diphosphate reductase (316 aa).

Cys-12 provides a ligand contact to [4Fe-4S] cluster. (2E)-4-hydroxy-3-methylbut-2-enyl diphosphate is bound by residues His-43 and His-81. Dimethylallyl diphosphate is bound by residues His-43 and His-81. Residues His-43 and His-81 each contribute to the isopentenyl diphosphate site. Cys-103 contacts [4Fe-4S] cluster. Residue His-131 participates in (2E)-4-hydroxy-3-methylbut-2-enyl diphosphate binding. Dimethylallyl diphosphate is bound at residue His-131. His-131 serves as a coordination point for isopentenyl diphosphate. The Proton donor role is filled by Glu-133. Position 170 (Thr-170) interacts with (2E)-4-hydroxy-3-methylbut-2-enyl diphosphate. Position 198 (Cys-198) interacts with [4Fe-4S] cluster. (2E)-4-hydroxy-3-methylbut-2-enyl diphosphate contacts are provided by Ser-226, Asn-228, and Ser-271. Dimethylallyl diphosphate is bound by residues Ser-226, Asn-228, and Ser-271. Isopentenyl diphosphate contacts are provided by Ser-226, Asn-228, and Ser-271.

This sequence belongs to the IspH family. It depends on [4Fe-4S] cluster as a cofactor.

The enzyme catalyses isopentenyl diphosphate + 2 oxidized [2Fe-2S]-[ferredoxin] + H2O = (2E)-4-hydroxy-3-methylbut-2-enyl diphosphate + 2 reduced [2Fe-2S]-[ferredoxin] + 2 H(+). It catalyses the reaction dimethylallyl diphosphate + 2 oxidized [2Fe-2S]-[ferredoxin] + H2O = (2E)-4-hydroxy-3-methylbut-2-enyl diphosphate + 2 reduced [2Fe-2S]-[ferredoxin] + 2 H(+). It functions in the pathway isoprenoid biosynthesis; dimethylallyl diphosphate biosynthesis; dimethylallyl diphosphate from (2E)-4-hydroxy-3-methylbutenyl diphosphate: step 1/1. It participates in isoprenoid biosynthesis; isopentenyl diphosphate biosynthesis via DXP pathway; isopentenyl diphosphate from 1-deoxy-D-xylulose 5-phosphate: step 6/6. Catalyzes the conversion of 1-hydroxy-2-methyl-2-(E)-butenyl 4-diphosphate (HMBPP) into a mixture of isopentenyl diphosphate (IPP) and dimethylallyl diphosphate (DMAPP). Acts in the terminal step of the DOXP/MEP pathway for isoprenoid precursor biosynthesis. The polypeptide is 4-hydroxy-3-methylbut-2-enyl diphosphate reductase (Bacillus mycoides (strain KBAB4) (Bacillus weihenstephanensis)).